The chain runs to 372 residues: Putative glutamate--cysteine ligase 2 (372 aa).

It belongs to the glutamate--cysteine ligase type 2 family. YbdK subfamily. Homodimer.

It carries out the reaction L-cysteine + L-glutamate + ATP = gamma-L-glutamyl-L-cysteine + ADP + phosphate + H(+). Its function is as follows. ATP-dependent carboxylate-amine ligase which exhibits weak glutamate--cysteine ligase activity. The protein is Putative glutamate--cysteine ligase 2 (ybdK) of Escherichia coli (strain K12 / MC4100 / BW2952).